The chain runs to 293 residues: NAD kinase (293 aa).

Asp-74 (proton acceptor) is an active-site residue. NAD(+)-binding positions include 74-75 (DG), Arg-79, 148-149 (NE), Arg-176, Asp-178, 189-194 (TAYALS), and Gln-248.

Belongs to the NAD kinase family. A divalent metal cation serves as cofactor.

The protein localises to the cytoplasm. The enzyme catalyses NAD(+) + ATP = ADP + NADP(+) + H(+). In terms of biological role, involved in the regulation of the intracellular balance of NAD and NADP, and is a key enzyme in the biosynthesis of NADP. Catalyzes specifically the phosphorylation on 2'-hydroxyl of the adenosine moiety of NAD to yield NADP. The sequence is that of NAD kinase from Blochmanniella floridana.